A 366-amino-acid chain; its full sequence is Anhydro-N-acetylmuramic acid kinase (366 aa).

10–17 (GTSLDGVD) contacts ATP.

It belongs to the anhydro-N-acetylmuramic acid kinase family.

The enzyme catalyses 1,6-anhydro-N-acetyl-beta-muramate + ATP + H2O = N-acetyl-D-muramate 6-phosphate + ADP + H(+). It participates in amino-sugar metabolism; 1,6-anhydro-N-acetylmuramate degradation. It functions in the pathway cell wall biogenesis; peptidoglycan recycling. Catalyzes the specific phosphorylation of 1,6-anhydro-N-acetylmuramic acid (anhMurNAc) with the simultaneous cleavage of the 1,6-anhydro ring, generating MurNAc-6-P. Is required for the utilization of anhMurNAc either imported from the medium or derived from its own cell wall murein, and thus plays a role in cell wall recycling. This Nitrobacter winogradskyi (strain ATCC 25391 / DSM 10237 / CIP 104748 / NCIMB 11846 / Nb-255) protein is Anhydro-N-acetylmuramic acid kinase.